Consider the following 518-residue polypeptide: 2-isopropylmalate synthase (518 aa).

The Pyruvate carboxyltransferase domain occupies 5–268 (IIIFDTTLRD…DTRINTQEIH (264 aa)). Mn(2+) is bound by residues D14, H202, H204, and N238. A regulatory domain region spans residues 393–518 (TLDVITSQCI…DLKLHKIAGV (126 aa)).

This sequence belongs to the alpha-IPM synthase/homocitrate synthase family. LeuA type 1 subfamily. As to quaternary structure, homodimer. Mn(2+) is required as a cofactor.

The protein resides in the cytoplasm. It carries out the reaction 3-methyl-2-oxobutanoate + acetyl-CoA + H2O = (2S)-2-isopropylmalate + CoA + H(+). It participates in amino-acid biosynthesis; L-leucine biosynthesis; L-leucine from 3-methyl-2-oxobutanoate: step 1/4. Functionally, catalyzes the condensation of the acetyl group of acetyl-CoA with 3-methyl-2-oxobutanoate (2-ketoisovalerate) to form 3-carboxy-3-hydroxy-4-methylpentanoate (2-isopropylmalate). This is 2-isopropylmalate synthase from Pasteurella multocida (strain Pm70).